The chain runs to 37 residues: Delta/kappa-conotoxin Mo3964 (37 aa).

3 disulfides stabilise this stretch: Cys4/Cys12, Cys11/Cys27, and Cys21/Cys34.

In terms of tissue distribution, expressed by the venom duct.

Its subcellular location is the secreted. Functionally, this toxin reduces the outward currents that are due to the opening of voltage-gated potassium channels in DRG neurons. In addition, leftward shift in the presence of this toxin is observed in averaged normalized conductance-voltage plot of outward sodium currents (Nav1.2/SCN2A). In Conus monile (Necklace cone), this protein is Delta/kappa-conotoxin Mo3964.